We begin with the raw amino-acid sequence, 246 residues long: Type III pantothenate kinase (246 aa).

6–13 is a binding site for ATP; that stretch reads DVGNTHSV. 103–106 provides a ligand contact to substrate; sequence GADR. Aspartate 105 functions as the Proton acceptor in the catalytic mechanism. Residue aspartate 125 participates in K(+) binding. Threonine 128 contacts ATP. Threonine 179 lines the substrate pocket.

Belongs to the type III pantothenate kinase family. In terms of assembly, homodimer. NH4(+) is required as a cofactor. K(+) serves as cofactor.

It localises to the cytoplasm. The enzyme catalyses (R)-pantothenate + ATP = (R)-4'-phosphopantothenate + ADP + H(+). Its pathway is cofactor biosynthesis; coenzyme A biosynthesis; CoA from (R)-pantothenate: step 1/5. Catalyzes the phosphorylation of pantothenate (Pan), the first step in CoA biosynthesis. The protein is Type III pantothenate kinase (coaX) of Thermotoga maritima (strain ATCC 43589 / DSM 3109 / JCM 10099 / NBRC 100826 / MSB8).